The chain runs to 95 residues: Small ribosomal subunit protein bS6 (95 aa).

The protein belongs to the bacterial ribosomal protein bS6 family.

Binds together with bS18 to 16S ribosomal RNA. The polypeptide is Small ribosomal subunit protein bS6 (Rhodococcus jostii (strain RHA1)).